A 723-amino-acid polypeptide reads, in one-letter code: Phenylalanine ammonia-lyase (723 aa).

Tyr-77 serves as the catalytic Proton donor/acceptor. A cross-link (5-imidazolinone (Ala-Gly)) is located at residues 182 to 184 (ASG). A 2,3-didehydroalanine (Ser) modification is found at Ser-183. (E)-cinnamate-binding residues include Asn-241, Gln-336, Arg-342, Asn-372, Lys-443, Glu-471, and Asn-474.

The protein belongs to the PAL/histidase family. Post-translationally, contains an active site 4-methylidene-imidazol-5-one (MIO), which is formed autocatalytically by cyclization and dehydration of residues Ala-Ser-Gly.

The protein resides in the cytoplasm. It carries out the reaction L-phenylalanine = (E)-cinnamate + NH4(+). The protein operates within secondary metabolite biosynthesis. Its pathway is phenylpropanoid metabolism; trans-cinnamate biosynthesis; trans-cinnamate from L-phenylalanine: step 1/1. Functionally, phenylalanine ammonia-lyase; part of the gene cluster that mediates the biosynthesis of squalestatin S1 (SQS1, also known as zaragozic acid A), a heavily oxidized fungal polyketide that offers potent cholesterol lowering activity by targeting squalene synthase (SS). SQS1 is composed of a 2,8-dioxobicyclic[3.2.1]octane-3,4,5-tricarboxyclic acid core that is connected to two lipophilic polyketide arms. These initial steps feature the priming of an unusual benzoic acid starter unit onto the highly reducing polyketide synthase clz14, followed by oxaloacetate extension and product release to generate a tricarboxylic acid containing product. The phenylalanine ammonia lyase (PAL) clz10 and the acyl-CoA ligase clz12 are involved in transforming phenylalanine into benzoyl-CoA. The citrate synthase-like protein clz17 is involved in connecting the C-alpha-carbons of the hexaketide chain and oxaloacetate to afford the tricarboxylic acid unit. The potential hydrolytic enzymes, clz11 and clz13, are in close proximity to pks2 and may participate in product release. On the other side, the tetraketide arm is synthesized by a the squalestatin tetraketide synthase clz2 and enzymatically esterified to the core in the last biosynthetic step, by the acetyltransferase clz6. The biosynthesis of the tetraketide must involve 3 rounds of chain extension. After the first and second rounds methyl-transfer occurs, and in all rounds of extension the ketoreductase and dehydratase are active. The enoyl reductase and C-MeT of clz2 are not active in the final round of extension. The acetyltransferase clz6 appears to have a broad substrate selectivity for its acyl CoA substrate, allowing the in vitro synthesis of novel squalestatins. The biosynthesis of SQS1 requires several oxidative steps likely performed by oxidoreductases clz3, clz15 and clz16. Finally, in support of the identification of the cluster as being responsible for SQS1 production, the cluster contains a gene encoding a putative squalene synthase (SS) clz20, suggesting a likely mechanism for self-resistance. The polypeptide is Phenylalanine ammonia-lyase (Cochliobolus lunatus (Filamentous fungus)).